We begin with the raw amino-acid sequence, 331 residues long: Ferrochelatase (331 aa).

Fe cation is bound by residues histidine 187 and glutamate 286.

It belongs to the ferrochelatase family.

Its subcellular location is the cytoplasm. The enzyme catalyses heme b + 2 H(+) = protoporphyrin IX + Fe(2+). It functions in the pathway porphyrin-containing compound metabolism; protoheme biosynthesis; protoheme from protoporphyrin-IX: step 1/1. Catalyzes the ferrous insertion into protoporphyrin IX. In Legionella pneumophila (strain Paris), this protein is Ferrochelatase.